The chain runs to 525 residues: Vesicular inhibitory amino acid transporter (525 aa).

Residues 1–132 lie on the Cytoplasmic side of the membrane; that stretch reads MATLLRSKLT…WNVTNAIQGM (132 aa). Residues 133-153 traverse the membrane as a helical segment; sequence FVLGLPYAILHGGYLGLFLII. Residues 154–204 are Lumenal, vesicle-facing; it reads FAAVVCCYTGKILIACLYEENEDGEVVRVRDSYVAIANACCAPRFPTLGGR. Residue Tyr186 is modified to 3'-nitrotyrosine. The chain crosses the membrane as a helical span at residues 205–225; it reads VVNVAQIIELVMTCILYVVVS. The Cytoplasmic portion of the chain corresponds to 226–265; the sequence is GNLMYNSFPGLPVSQKSWSIIATAVLLPCAFLKNLKAVSK. Residues 266–286 form a helical membrane-spanning segment; sequence FSLLCTLAHFVINILVIAYCL. Topologically, residues 287–305 are lumenal, vesicle; that stretch reads SRARDWAWEKVKFYIDVKK. The helical transmembrane segment at 306 to 326 threads the bilayer; sequence FPISIGIIVFSYTSQIFLPSL. Over 327–341 the chain is Cytoplasmic; that stretch reads EGNMQQPSEFHCMMN. A helical membrane pass occupies residues 342–362; the sequence is WTHIAACVLKGLFALVAYLTW. Over 363–383 the chain is Lumenal, vesicle; the sequence is ADETKEVITDNLPGSIRAVVN. A helical membrane pass occupies residues 384-404; that stretch reads IFLVAKALLSYPLPFFAAVEV. Topologically, residues 405–438 are cytoplasmic; sequence LEKSLFQEGSRAFFPACYGGDGRLKSWGLTLRCA. Residues 439–459 form a helical membrane-spanning segment; sequence LVVFTLLMAIYVPHFALLMGL. Topologically, residues 460–461 are lumenal, vesicle; the sequence is TG. The chain crosses the membrane as a helical span at residues 462–482; the sequence is SLTGAGLCFLLPSLFHLRLLW. The Cytoplasmic portion of the chain corresponds to 483–489; the sequence is RKLLWHQ. A helical transmembrane segment spans residues 490 to 510; it reads VFFDVAIFVIGGICSVSGFVH. Topologically, residues 511-525 are lumenal, vesicle; the sequence is SLEGLIEAYRTNAED.

Belongs to the amino acid/polyamine transporter 2 family. As to expression, brain. Expressed at high levels within the neocortex, hippocampus, cerebellum, striatum, septal nuclei and the reticular nucleus of the thalamus. Also expressed in islets where it is more abundant in the peripheral/mantle region. Highly expressed in the nerve endings of GABA neurons in the brain and spinal cord but also in glycinergic nerve endings. Expressed in glycine-, GABA- or GABA- and glycine-containing boutons.

The protein resides in the cytoplasmic vesicle. It is found in the secretory vesicle. Its subcellular location is the synaptic vesicle membrane. It localises to the presynapse. It carries out the reaction beta-alanine(out) + n H(+)(in) = beta-alanine(in) + n H(+)(out). The catalysed reaction is 4-aminobutanoate(out) + n H(+)(in) = 4-aminobutanoate(in) + n H(+)(out). The enzyme catalyses glycine(out) + n H(+)(in) = glycine(in) + n H(+)(out). Its function is as follows. Antiporter that exchanges vesicular protons for cytosolic 4-aminobutanoate or to a lesser extend glycine, thus allowing their secretion from nerve terminals. The transport is equally dependent on the chemical and electrical components of the proton gradient. May also transport beta-alanine. Acidification of GABAergic synaptic vesicles is a prerequisite for 4-aminobutanoate uptake. The sequence is that of Vesicular inhibitory amino acid transporter from Rattus norvegicus (Rat).